The following is a 2488-amino-acid chain: PKS-NRPS hybrid synthetase swnK (2488 aa).

The tract at residues 33 to 422 is adenylation (A) domain; the sequence is FEQVADRFPD…GRIDGVVKIR (390 aa). The 76-residue stretch at 523-598 folds into the Carrier 1 domain; it reads QPTSELEQRI…ALAAYLAGTG (76 aa). Ser-558 is subject to O-(pantetheine 4'-phosphoryl)serine. In terms of domain architecture, Ketosynthase family 3 (KS3) spans 616–1039; sequence HEDIAIVSMA…GTNAHVIVEE (424 aa). Residues Cys-785, His-920, and His-960 each act as for beta-ketoacyl synthase activity in the active site. The interval 1149-1471 is malonyl-CoA:ACP transacylase (MAT) domain; the sequence is LFTGQGSQLP…SLSELHVRHV (323 aa). The segment at 1723–1901 is ketoreductase (KR) domain; that stretch reads GAVLVTGGLG…ASSVAYGTWA (179 aa). The region spanning 2002–2077 is the Carrier 2 domain; that stretch reads SIVLHMVQAT…SLSEFLLCRL (76 aa). An O-(pantetheine 4'-phosphoryl)serine modification is found at Ser-2037. The interval 2084–2103 is disordered; that stretch reads STSSPSDTDGATPSTPTSAA. The segment at 2136-2364 is thioester reductase (TE) domain; the sequence is VTGATGFVGT…VLPVDYLCGT (229 aa).

In the N-terminal section; belongs to the NRP synthetase family.

The catalysed reaction is L-pipecolate + malonyl-CoA + 2 NADPH + 4 H(+) = (8aS)-octahydroindolizin-1-one + CO2 + 2 NADP(+) + CoA + 2 H2O. It carries out the reaction L-pipecolate + malonyl-CoA + 3 NADPH + 5 H(+) = (1R,8aS)-octahydroindolizin-1-ol + CO2 + 3 NADP(+) + CoA + 2 H2O. It catalyses the reaction L-pipecolate + malonyl-CoA + 3 NADPH + 5 H(+) = (1S,8aS)-octahydroindolizin-1-ol + CO2 + 3 NADP(+) + CoA + 2 H2O. It participates in mycotoxin biosynthesis. PKS-NRPS hybrid synthetase; part of the gene cluster that mediates the biosynthesis of swainsonine (SW), a cytotoxic fungal alkaloid and a potential cancer therapy drug. Swainsonine production occurs via a multibranched pathway and is dispensable for fungal colonization of plants and infection of insect hosts. The first step of swainsonine biosynthesis is the production of the precursor pipecolic acid (PA) via conversion of L-lysine (Lys) to 1-piperideine-6-carboxylate (P6C) by the aminotransferase swnA, the latter being further reduced to PA by the reductase swnR. PA can be converted from lysine by both the SW biosynthetic cluster and the unclustered genes such as lysine cyclodeaminase. The PKS-NRPS hybrid synthetase swnK uptakes and condensates PA and malonyl-CoA with and without skipping of the ketoreductase (KR) domain in order to produce 3 intermediates, 1-oxoindolizidine, (1S)-1-hydroxyindolizin, and (1R)-1-hydroxyindolizine; with the transisomer (1S)-1-hydroxyindolizin being predominant. The terminal thioester reductase (TE) domain of swnK is involved in reduction of the thioester bond to release the intermediate aldehydes. The oxidoreductase swnN could contribute to the reduction of 1-oxoindolizidine to (1S)-1-hydroxyindolizin and (1R)-1-hydroxyindolizine, contributing to the major route of SW production. The dioxygenase swnH2 would be responsible for the oxidization of (1R)-1-hydroxyindolizine into (1R,2S)-1,2-dihydroxyindolizine and of (1S)-1-hydroxyindolizin to yield both (1R,2S)-1,2-dihydroxyindolizine and (1S,2S)-1,2-dihydroxyindolizine. The dioxygenase swnH1 then performs the conversion of the 1,2-dihydroxyindolizine epimers to SW. This Metarhizium robertsii (strain ARSEF 23 / ATCC MYA-3075) (Metarhizium anisopliae (strain ARSEF 23)) protein is PKS-NRPS hybrid synthetase swnK.